Consider the following 312-residue polypeptide: DNA-directed RNA polymerase subunit alpha (312 aa).

The interval 1–229 (MLQYQIDRIE…ELFQPLATVT (229 aa)) is alpha N-terminal domain (alpha-NTD). Residues 239–312 (EPTAEAQIPL…IQIPQSRTSA (74 aa)) form an alpha C-terminal domain (alpha-CTD) region.

It belongs to the RNA polymerase alpha chain family. In terms of assembly, in cyanobacteria the RNAP catalytic core is composed of 2 alpha, 1 beta, 1 beta', 1 gamma and 1 omega subunit. When a sigma factor is associated with the core the holoenzyme is formed, which can initiate transcription.

It carries out the reaction RNA(n) + a ribonucleoside 5'-triphosphate = RNA(n+1) + diphosphate. Functionally, DNA-dependent RNA polymerase catalyzes the transcription of DNA into RNA using the four ribonucleoside triphosphates as substrates. The protein is DNA-directed RNA polymerase subunit alpha of Synechococcus sp. (strain WH7803).